The sequence spans 106 residues: Large ribosomal subunit protein eL42 (106 aa).

The protein belongs to the eukaryotic ribosomal protein eL42 family.

This is Large ribosomal subunit protein eL42 (RPL44) from Candida tropicalis (Yeast).